The primary structure comprises 516 residues: Endoglucanase 20 (516 aa).

Residues 1–23 form the signal peptide; that stretch reads MAAGMVATMVLLTCLAAGGLVVG. N83 carries N-linked (GlcNAc...) asparagine glycosylation. The active-site Nucleophile is the D93. Catalysis depends on residues H416, D468, and E477.

This sequence belongs to the glycosyl hydrolase 9 (cellulase E) family.

It is found in the secreted. The enzyme catalyses Endohydrolysis of (1-&gt;4)-beta-D-glucosidic linkages in cellulose, lichenin and cereal beta-D-glucans.. The sequence is that of Endoglucanase 20 (GLU15) from Oryza sativa subsp. japonica (Rice).